Consider the following 270-residue polypeptide: Phosphatidate cytidylyltransferase (270 aa).

7 helical membrane-spanning segments follow: residues 19–39 (LWLTWVGGVGFTLFSIAIGLA), 53–73 (TAFSRLFGWAWLIVTGILLIL), 76–96 (GALLTIGFLVAGCAILLVTQW), 101–121 (GWPAAGLFYAGFSALSLSLLR), 126–146 (FGFTTIVFLFAVVWSTDIAAY), 183–203 (LVASLVAAPGGWGVPVLALLL), and 248–268 (ALLYLFGAIFAEPDVPSAIFF).

It belongs to the CDS family.

The protein resides in the cell inner membrane. The enzyme catalyses a 1,2-diacyl-sn-glycero-3-phosphate + CTP + H(+) = a CDP-1,2-diacyl-sn-glycerol + diphosphate. Its pathway is phospholipid metabolism; CDP-diacylglycerol biosynthesis; CDP-diacylglycerol from sn-glycerol 3-phosphate: step 3/3. The chain is Phosphatidate cytidylyltransferase (cdsA) from Brucella suis biovar 1 (strain 1330).